The chain runs to 88 residues: YcgL domain-containing protein HI_1446 (88 aa).

Residues 1-85 (MLCAIYKSKK…QDDGLFNSLS (85 aa)) form the YcgL domain.

The chain is YcgL domain-containing protein HI_1446 from Haemophilus influenzae (strain ATCC 51907 / DSM 11121 / KW20 / Rd).